The following is a 423-amino-acid chain: Putative competence-damage inducible protein (423 aa).

This sequence belongs to the CinA family.

The protein is Putative competence-damage inducible protein of Streptococcus uberis (strain ATCC BAA-854 / 0140J).